A 714-amino-acid polypeptide reads, in one-letter code: Fatty acid oxidation complex subunit alpha (714 aa).

The segment at 1-190 (MEMASAFTLN…KLGLVDDVVP (190 aa)) is enoyl-CoA hydratase. The segment at 306–714 (APLNSVGILG…FWKTTATDLQ (409 aa)) is 3-hydroxyacyl-CoA dehydrogenase.

This sequence in the N-terminal section; belongs to the enoyl-CoA hydratase/isomerase family. It in the central section; belongs to the 3-hydroxyacyl-CoA dehydrogenase family. In terms of assembly, heterotetramer of two alpha chains (FadJ) and two beta chains (FadI).

The protein resides in the cytoplasm. It catalyses the reaction a (3S)-3-hydroxyacyl-CoA = a (2E)-enoyl-CoA + H2O. It carries out the reaction a 4-saturated-(3S)-3-hydroxyacyl-CoA = a (3E)-enoyl-CoA + H2O. The catalysed reaction is a (3S)-3-hydroxyacyl-CoA + NAD(+) = a 3-oxoacyl-CoA + NADH + H(+). The enzyme catalyses (3S)-3-hydroxybutanoyl-CoA = (3R)-3-hydroxybutanoyl-CoA. Its pathway is lipid metabolism; fatty acid beta-oxidation. Functionally, catalyzes the formation of a hydroxyacyl-CoA by addition of water on enoyl-CoA. Also exhibits 3-hydroxyacyl-CoA epimerase and 3-hydroxyacyl-CoA dehydrogenase activities. This Escherichia coli O81 (strain ED1a) protein is Fatty acid oxidation complex subunit alpha.